A 266-amino-acid chain; its full sequence is Uridylate kinase (266 aa).

26 to 29 is a binding site for ATP; it reads KLGG. Gly-67 contacts UMP. Residues Gly-68 and Arg-72 each coordinate ATP. UMP-binding positions include Asp-87 and 148–155; that span reads LGAPYFST. Tyr-181 and Asp-184 together coordinate ATP.

This sequence belongs to the UMP kinase family. In terms of assembly, homohexamer.

The protein resides in the cytoplasm. The catalysed reaction is UMP + ATP = UDP + ADP. The protein operates within pyrimidine metabolism; CTP biosynthesis via de novo pathway; UDP from UMP (UMPK route): step 1/1. Inhibited by UTP. In terms of biological role, catalyzes the reversible phosphorylation of UMP to UDP. This chain is Uridylate kinase, found in Acidothermus cellulolyticus (strain ATCC 43068 / DSM 8971 / 11B).